A 66-amino-acid chain; its full sequence is Large ribosomal subunit protein bL35 (66 aa).

Composition is skewed to basic residues over residues 1–15 (MSKL…KRFK) and 22–43 (ILHK…RKRR). A disordered region spans residues 1–43 (MSKLKTRSSAAKRFKVTATGKILHKKAGKRHNLSKKSESRKRR).

It belongs to the bacterial ribosomal protein bL35 family.

The protein is Large ribosomal subunit protein bL35 of Dictyoglomus turgidum (strain DSM 6724 / Z-1310).